The sequence spans 1642 residues: Coiled-coil domain-containing protein 7A (1642 aa).

A disordered region spans residues 21-51 (PYKKGLLNSSPKPKEKHNAKSKYGKNESMVL). The stretch at 161-184 (VNQMEEISKDQSNLEELQSDGKTA) is one LRR 1 repeat. Residues 279–330 (LEKALNDQQTIESKYKQLETDFQMLIMEKTLLEAEIRRLREIERVKSAAKEE) are a coiled coil. The LRR 2 repeat unit spans residues 1310 to 1333 (IKELSKTLNLDGGDIELSDFVFKT).

In terms of tissue distribution, exclusively expressed in the testes.

The protein is Coiled-coil domain-containing protein 7A of Mus musculus (Mouse).